A 425-amino-acid chain; its full sequence is Intermediate conductance calcium-activated potassium channel protein 4 (425 aa).

The helical transmembrane segment at 30-50 threads the bilayer; the sequence is LVLAGTGIGLMVLHAEMLWFL. Residues 59-79 form a helical membrane-spanning segment; that stretch reads LLVKCLITLSTAFLLCLIVVF. A helical membrane pass occupies residues 105 to 121; sequence VAQILLELLVCGVHPVP. The chain crosses the membrane as a helical span at residues 141–161; sequence GFLGEGEALLSLAMLLRLYLV. A helical membrane pass occupies residues 205–225; sequence LLLGLTLGLWLTTAWVLSVAE. The segment at residues 239–259 is an intramembrane region (pore-forming); sequence LWLIPITFLTIGYGDVVPGTL. The helical transmembrane segment at 263–283 threads the bilayer; it reads IVCLCTGVMGVCCTALLVAVV. The tract at residues 284–345 is calmodulin-binding; sequence ARKLEFNKAE…RRHQRKMLAA (62 aa). Histidine 356 carries the post-translational modification Phosphohistidine.

This sequence belongs to the potassium channel KCNN family. KCa3.1/KCNN4 subfamily. Homodimer. Homotetramer. Heterotetramer of potassium channel proteins. Interacts with MTMR6; this interaction leads to selective dephosphorylation of PI(3)P in a lipid microdomain adjacent to KCNN4, resulting in a decrease of intermediate conductance calcium-activated potassium channel activity. Interacts (via the C-tail domain) with CALM1; the calmodulin binding is constitutive, does not require calcium and mediates calcium-dependent gating and four calmodulin molecules bind to one channel tetramer. Post-translationally, phosphorylation at His-356 by NDKB activates the intermediate conductance calcium-activated potassium channel activity, and conversely it's dephosphorylation by PHPT1 inhibits this activity.

The protein localises to the cell membrane. It is found in the cell projection. The protein resides in the ruffle membrane. It carries out the reaction K(+)(in) = K(+)(out). Intermediate conductance calcium-activated potassium channel that mediates the voltage-independent transmembrane transfer of potassium across the cell membrane through a constitutive interaction with calmodulin which binds the intracellular calcium allowing its opening. The current is characterized by a voltage-independent activation, an intracellular calcium concentration increase-dependent activation and a single-channel conductance of about 25 picosiemens. Also presents an inwardly rectifying current, thus reducing its already small outward conductance of potassium ions, which is particularly the case when the membrane potential displays positive values, above + 20 mV. Controls calcium influx during vascular contractility by being responsible of membrane hyperpolarization induced by vasoactive factors in proliferative vascular smooth muscle cell types. Following calcium influx, the consecutive activation of KCNN4 channel leads to a hyperpolarization of the cell membrane potential and hence an increase of the electrical driving force for further calcium influx promoting sustained calcium entry in response to stimulation with chemotactic peptides. Required for maximal calcium influx and proliferation during the reactivation of naive T-cells. Plays a role in the late stages of EGF-induced macropinocytosis through activation by PI(3)P. The chain is Intermediate conductance calcium-activated potassium channel protein 4 from Rattus norvegicus (Rat).